Consider the following 998-residue polypeptide: MVVTKPATQRPRLPSVGRLGLVDPQAAERMAQLGWYDHDDQAHVDLLWALSRAPDPDAALLALVRLAETPDAGWDELGAALLTERPLRGRLFAVLGSSLALGDHLVAQPRSWKLLRGNVSLPTHDELCAMFTGCVDEALADPGSAMVRLRTLYRDRLLVLAALDLAATVEDEPVLPFTVVAAHLSDLADAALAAALRVAEHNVCGDRTPPRLAVIAMGKCGARELNYVSDVDVIFVGERADTVTTRVASEMMRLASEAFFQVDAGLRPEGRSGELVRTVESHIAYYQRWAKTWEFQALLKARAAVGDAELGRRYLDALMPMVWVACEREDFVVEVQAMRRRVEQLVPADVRGREIKLGSGGLRDVEFAVQLLQLVHGRSDESLHVASTVDALAALGQGGYIGREDAANLTASYEFLRLLEHRLQLQRLKRTHLLPEADDEEAVRWLARAAHIRPDGRHDAAGVLREELRHQNLRVSQLHAKLFYQPLLESIGPAGLEIRHGMTSEAAERQLAALGYEGPQSALKHMSALVNQSGRRGRVQSVLLPRLLNWMSYAPDPDGGLLAYRRLSEALAGESWYLSTLRDKPAVARRLMHVLGTSAYVPDLLMRAPRVIQDYGDGPSGPRLLETDPAAVARALVASASRYSDPVRAIAGARTLRRRELARVASADLLGMLEVTDVCKALTSVWVAVLQAALDAMIRANLPDDGPQRGKAPAAIAVIGMGRLGGAELGYGSDADVMFVCEPAPGVDDSAAVRWAASVAEQVRTLLGTPSVDPPLDVDANLRPEGRNGPLVRTLASYAAYYEQWAQPWEIQALLRAHAVAGDAELGQRFLLMADKTRYPADGVSPEAVREIRRIKARVDAERLPRGADPNTHTKLGRGGLADIEWTVQLLQLLHAHEVPALHNTSTLECLDAIAEAGLVPADEVDLLRQAWLTATRARNALVLVRGKPTDQLPGPGRQLNAVAVAAGWPTDEGGEFLDNYLRVTRRAKAVVRKVFGS.

The tract at residues 1–487 (MVVTKPATQR…LHAKLFYQPL (487 aa)) is adenylyl removase. The interval 492–998 (GPAGLEIRHG…KAVVRKVFGS (507 aa)) is adenylyl transferase.

The protein belongs to the GlnE family. Mg(2+) is required as a cofactor.

It carries out the reaction [glutamine synthetase]-O(4)-(5'-adenylyl)-L-tyrosine + phosphate = [glutamine synthetase]-L-tyrosine + ADP. It catalyses the reaction [glutamine synthetase]-L-tyrosine + ATP = [glutamine synthetase]-O(4)-(5'-adenylyl)-L-tyrosine + diphosphate. Its function is as follows. Involved in the regulation of glutamine synthetase GlnA, a key enzyme in the process to assimilate ammonia. When cellular nitrogen levels are high, the C-terminal adenylyl transferase (AT) inactivates GlnA by covalent transfer of an adenylyl group from ATP to specific tyrosine residue of GlnA, thus reducing its activity. Conversely, when nitrogen levels are low, the N-terminal adenylyl removase (AR) activates GlnA by removing the adenylyl group by phosphorolysis, increasing its activity. The regulatory region of GlnE binds the signal transduction protein PII (GlnB) which indicates the nitrogen status of the cell. The polypeptide is Bifunctional glutamine synthetase adenylyltransferase/adenylyl-removing enzyme (Mycobacterium avium (strain 104)).